A 512-amino-acid chain; its full sequence is Kynurenine 3-monooxygenase (512 aa).

The protein belongs to the aromatic-ring hydroxylase family. KMO subfamily. FAD serves as cofactor.

The protein localises to the mitochondrion outer membrane. The enzyme catalyses L-kynurenine + NADPH + O2 + H(+) = 3-hydroxy-L-kynurenine + NADP(+) + H2O. It participates in cofactor biosynthesis; NAD(+) biosynthesis; quinolinate from L-kynurenine: step 1/3. Functionally, catalyzes the hydroxylation of L-kynurenine (L-Kyn) to form 3-hydroxy-L-kynurenine (L-3OHKyn). Required for synthesis of quinolinic acid. This is Kynurenine 3-monooxygenase (bna4) from Neosartorya fischeri (strain ATCC 1020 / DSM 3700 / CBS 544.65 / FGSC A1164 / JCM 1740 / NRRL 181 / WB 181) (Aspergillus fischerianus).